A 137-amino-acid chain; its full sequence is Small ribosomal subunit protein uS9 (137 aa).

Over residues 105 to 117 the composition is skewed to basic and acidic residues; sequence LKIEGHLSRDPRA. Residues 105-137 form a disordered region; that stretch reads LKIEGHLSRDPRAKERRKYGLKKARKAPQFSKR. Residues 118 to 137 show a composition bias toward basic residues; it reads KERRKYGLKKARKAPQFSKR.

Belongs to the universal ribosomal protein uS9 family.

The polypeptide is Small ribosomal subunit protein uS9 (Prochlorococcus marinus (strain MIT 9211)).